An 87-amino-acid chain; its full sequence is Toxin Cll3 (87 aa).

An N-terminal signal peptide occupies residues 1–19 (MNSLLMITACLAVIGTVWA). Positions 20–85 (KEGYIVNYYD…VWPLPNKTCY (66 aa)) constitute an LCN-type CS-alpha/beta domain. Intrachain disulfides connect C31–C84, C35–C60, C44–C65, and C48–C67. Tyrosine amide is present on Y85.

It belongs to the long (4 C-C) scorpion toxin superfamily. Sodium channel inhibitor family. Beta subfamily. In terms of tissue distribution, expressed by the venom gland.

It is found in the secreted. Functionally, beta toxins bind voltage-independently at site-4 of sodium channels (Nav) and shift the voltage of activation toward more negative potentials thereby affecting sodium channel activation and promoting spontaneous and repetitive firing. The sequence is that of Toxin Cll3 from Centruroides limpidus (Mexican scorpion).